The following is a 445-amino-acid chain: Glucose-6-phosphate isomerase (445 aa).

Glu-284 serves as the catalytic Proton donor. Active-site residues include His-305 and Lys-419.

This sequence belongs to the GPI family.

Its subcellular location is the cytoplasm. The enzyme catalyses alpha-D-glucose 6-phosphate = beta-D-fructose 6-phosphate. The protein operates within carbohydrate biosynthesis; gluconeogenesis. Its pathway is carbohydrate degradation; glycolysis; D-glyceraldehyde 3-phosphate and glycerone phosphate from D-glucose: step 2/4. In terms of biological role, catalyzes the reversible isomerization of glucose-6-phosphate to fructose-6-phosphate. The chain is Glucose-6-phosphate isomerase from Leptospira borgpetersenii serovar Hardjo-bovis (strain JB197).